The following is a 364-amino-acid chain: Dihydroorotate dehydrogenase (quinone) (364 aa).

FMN is bound by residues 62–66 and Thr86; that span reads AGFDK. A substrate-binding site is contributed by Lys66. 111 to 115 contacts substrate; that stretch reads NRMGF. The FMN site is built by Asn142 and Asn175. Residue Asn175 participates in substrate binding. The active-site Nucleophile is Ser178. Asn180 is a binding site for substrate. FMN-binding residues include Lys216 and Thr244. Residue 245 to 246 coordinates substrate; it reads NT. FMN contacts are provided by residues Gly267, Gly296, and 317 to 318; that span reads YT.

Belongs to the dihydroorotate dehydrogenase family. Type 2 subfamily. Monomer. FMN serves as cofactor.

It is found in the cell membrane. The catalysed reaction is (S)-dihydroorotate + a quinone = orotate + a quinol. The protein operates within pyrimidine metabolism; UMP biosynthesis via de novo pathway; orotate from (S)-dihydroorotate (quinone route): step 1/1. In terms of biological role, catalyzes the conversion of dihydroorotate to orotate with quinone as electron acceptor. The chain is Dihydroorotate dehydrogenase (quinone) from Anaeromyxobacter sp. (strain K).